Reading from the N-terminus, the 498-residue chain is Glutamate--tRNA ligase (498 aa).

Positions 11–21 (PSPTGHLHIGN) match the 'HIGH' region motif. Residues 261-265 (KLSKR) carry the 'KMSKS' region motif. Lysine 264 is an ATP binding site.

It belongs to the class-I aminoacyl-tRNA synthetase family. Glutamate--tRNA ligase type 1 subfamily. In terms of assembly, monomer.

It localises to the cytoplasm. It carries out the reaction tRNA(Glu) + L-glutamate + ATP = L-glutamyl-tRNA(Glu) + AMP + diphosphate. Catalyzes the attachment of glutamate to tRNA(Glu) in a two-step reaction: glutamate is first activated by ATP to form Glu-AMP and then transferred to the acceptor end of tRNA(Glu). The sequence is that of Glutamate--tRNA ligase from Oenococcus oeni (strain ATCC BAA-331 / PSU-1).